The sequence spans 585 residues: Formate--tetrahydrofolate ligase (585 aa).

65 to 72 provides a ligand contact to ATP; the sequence is TPHGEGKT.

The protein belongs to the formate--tetrahydrofolate ligase family.

The catalysed reaction is (6S)-5,6,7,8-tetrahydrofolate + formate + ATP = (6R)-10-formyltetrahydrofolate + ADP + phosphate. Its pathway is one-carbon metabolism; tetrahydrofolate interconversion. The chain is Formate--tetrahydrofolate ligase from Shewanella baltica (strain OS155 / ATCC BAA-1091).